Consider the following 94-residue polypeptide: MATDLNIDHVANLARLALTPEEKATFAQQLGDVLHHIEQLAKVDVAGVEPTAHAFAVTNVWADDAPQPGLSVEAALKNAPAQREHMVVVPKVVE.

The protein belongs to the GatC family. Heterotrimer of A, B and C subunits.

The enzyme catalyses L-glutamyl-tRNA(Gln) + L-glutamine + ATP + H2O = L-glutaminyl-tRNA(Gln) + L-glutamate + ADP + phosphate + H(+). It carries out the reaction L-aspartyl-tRNA(Asn) + L-glutamine + ATP + H2O = L-asparaginyl-tRNA(Asn) + L-glutamate + ADP + phosphate + 2 H(+). Functionally, allows the formation of correctly charged Asn-tRNA(Asn) or Gln-tRNA(Gln) through the transamidation of misacylated Asp-tRNA(Asn) or Glu-tRNA(Gln) in organisms which lack either or both of asparaginyl-tRNA or glutaminyl-tRNA synthetases. The reaction takes place in the presence of glutamine and ATP through an activated phospho-Asp-tRNA(Asn) or phospho-Glu-tRNA(Gln). This Opitutus terrae (strain DSM 11246 / JCM 15787 / PB90-1) protein is Aspartyl/glutamyl-tRNA(Asn/Gln) amidotransferase subunit C.